Consider the following 126-residue polypeptide: VEGSLVQFETLIMKLAKRSGFFWYSFYGCYCGWGGHGLPQDPTDRCCFVHDCCYGKVTNCNPKTATYSYTEENDGIVCGGDDPCKKQVCECDRVAAMCFRDNKDTYDSDKYWKLPPQKCQEDPEPC.

Positions 1–3 are cleaved as a signal peptide; sequence VEG. 7 disulfides stabilise this stretch: C29-C119, C31-C47, C46-C98, C52-C126, C53-C91, C60-C84, and C78-C89. The Ca(2+) site is built by Y30, G32, and G34. H50 is a catalytic residue. D51 provides a ligand contact to Ca(2+). D92 is a catalytic residue.

Homodimer. Requires Ca(2+) as cofactor. Expressed by the venom gland.

It localises to the secreted. The enzyme catalyses a 1,2-diacyl-sn-glycero-3-phosphocholine + H2O = a 1-acyl-sn-glycero-3-phosphocholine + a fatty acid + H(+). Functionally, snake venom phospholipase that inhibits ADP-induced platelet aggregation. PLA2 catalyzes the calcium-dependent hydrolysis of the 2-acyl groups in 3-sn-phosphoglycerides. This Calloselasma rhodostoma (Malayan pit viper) protein is Acidic phospholipase A2 S1E6-b.